A 356-amino-acid polypeptide reads, in one-letter code: D-alanine--D-alanine ligase (356 aa).

The region spanning 134–339 (KQLFEHRGLP…YPELITKLIE (206 aa)) is the ATP-grasp domain. ATP is bound at residue 167-222 (NDKLNYPVFVKPANLGSSVGISKCNNEAELKEGIKEAFQFDRKLVIEQGVNAREIE). The Mg(2+) site is built by Asp293, Glu306, and Asn308.

Belongs to the D-alanine--D-alanine ligase family. The cofactor is Mg(2+). Mn(2+) is required as a cofactor.

The protein localises to the cytoplasm. It catalyses the reaction 2 D-alanine + ATP = D-alanyl-D-alanine + ADP + phosphate + H(+). It functions in the pathway cell wall biogenesis; peptidoglycan biosynthesis. Cell wall formation. In Staphylococcus aureus (strain MSSA476), this protein is D-alanine--D-alanine ligase.